We begin with the raw amino-acid sequence, 485 residues long: Cobyric acid synthase (485 aa).

A GATase cobBQ-type domain is found at 248 to 435; it reads RLKVAVAVPP…LHGLFESPAA (188 aa). Cysteine 329 functions as the Nucleophile in the catalytic mechanism. The active site involves histidine 427.

Belongs to the CobB/CobQ family. CobQ subfamily.

Its pathway is cofactor biosynthesis; adenosylcobalamin biosynthesis. Its function is as follows. Catalyzes amidations at positions B, D, E, and G on adenosylcobyrinic A,C-diamide. NH(2) groups are provided by glutamine, and one molecule of ATP is hydrogenolyzed for each amidation. This Azotobacter vinelandii (strain DJ / ATCC BAA-1303) protein is Cobyric acid synthase.